A 303-amino-acid chain; its full sequence is Ribonuclease HIII (303 aa).

The RNase H type-2 domain occupies 89 to 303 (WSVLGSDEVG…ANTKKAERLL (215 aa)). 3 residues coordinate a divalent metal cation: aspartate 95, glutamate 96, and aspartate 199.

This sequence belongs to the RNase HII family. RnhC subfamily. Mn(2+) is required as a cofactor. Requires Mg(2+) as cofactor.

The protein localises to the cytoplasm. The catalysed reaction is Endonucleolytic cleavage to 5'-phosphomonoester.. Its function is as follows. Endonuclease that specifically degrades the RNA of RNA-DNA hybrids. This Leuconostoc mesenteroides subsp. mesenteroides (strain ATCC 8293 / DSM 20343 / BCRC 11652 / CCM 1803 / JCM 6124 / NCDO 523 / NBRC 100496 / NCIMB 8023 / NCTC 12954 / NRRL B-1118 / 37Y) protein is Ribonuclease HIII.